Consider the following 225-residue polypeptide: Insulin-induced gene 2 protein (225 aa).

The Cytoplasmic portion of the chain corresponds to 1–28 (MAEGETESPGPKKCGPYISSVTSQSVNL). A helical membrane pass occupies residues 29 to 51 (MIRGVVLFFIGVFLALVLNLLQI). Residues 52–70 (QRNVTLFPPDVIASIFSSA) lie on the Lumenal side of the membrane. Residues 71 to 88 (WWVPPCCGTASAVIGLLY) form a helical membrane-spanning segment. Residues 89–103 (PCIDRHLGEPHKFKR) are Cytoplasmic-facing. Residues 104 to 126 (EWSSVMRCVAVFVGINHASAKVD) form a helical membrane-spanning segment. Residues 127-129 (FDN) lie on the Lumenal side of the membrane. The helical transmembrane segment at 130-148 (NIQLSLTLAALSIGLWWTF) threads the bilayer. Topologically, residues 149–153 (DRSRS) are cytoplasmic. Position 151 is a phosphoserine; by PCK1 (S151). A helical transmembrane segment spans residues 154–175 (GFGLGVGIAFLATVVTQLLVYN). Residues 176–189 (GVYQYTSPDFLYVR) are Lumenal-facing. A helical transmembrane segment spans residues 190–207 (SWLPCIFFAGGITMGNIG). Residues 208-225 (RQLAMYECKVIAEKSHQE) are Cytoplasmic-facing. C215 is subject to Cysteine sulfenic acid (-SOH); alternate. A Glycyl cysteine thioester (Cys-Gly) (interchain with G-Cter in ubiquitin); alternate cross-link involves residue C215. Positions 219 to 225 (AEKSHQE) match the KxHxx motif.

Belongs to the INSIG family. As to quaternary structure, interacts with SCAP; interaction is direct and only takes place in the presence of sterols; it prevents interaction between SCAP and the coat protein complex II (COPII). Associates with the SCAP-SREBP complex (composed of SCAP and SREBF1/SREBP1 or SREBF2/SREBP2); association is mediated via its interaction with SCAP and only takes place in the presence of sterols. Interacts with RNF139. Interacts with RNF145. In terms of processing, phosphorylation at Ser-151 by PCK1 reduces binding to oxysterol, disrupting the interaction between INSIG2 and SCAP, thereby promoting nuclear translocation of SREBP proteins (SREBF1/SREBP1 or SREBF2/SREBP2) and subsequent transcription of downstream lipogenesis-related genes. Post-translationally, polyubiquitinated by AMFR/gp78 at Cys-215 in some tissues such as adipose tissues, undifferentiated myoblasts and liver, leading to its degradation. In differentiated myotubes, Cys-215 oxidation prevents ubiquitination at the same site, resulting in protein stabilization. Oxidized at Cys-215 in differentiated myotubes, preventing ubiquitination at the same site, and resulting in protein stabilization.

Its subcellular location is the endoplasmic reticulum membrane. Its function is as follows. Oxysterol-binding protein that mediates feedback control of cholesterol synthesis by controlling both endoplasmic reticulum to Golgi transport of SCAP and degradation of HMGCR. Acts as a negative regulator of cholesterol biosynthesis by mediating the retention of the SCAP-SREBP complex in the endoplasmic reticulum, thereby blocking the processing of sterol regulatory element-binding proteins (SREBPs) SREBF1/SREBP1 and SREBF2/SREBP2. Binds oxysterol, including 22-hydroxycholesterol, 24-hydroxycholesterol, 25-hydroxycholesterol and 27-hydroxycholesterol, regulating interaction with SCAP and retention of the SCAP-SREBP complex in the endoplasmic reticulum. In presence of oxysterol, interacts with SCAP, retaining the SCAP-SREBP complex in the endoplasmic reticulum, thereby preventing SCAP from escorting SREBF1/SREBP1 and SREBF2/SREBP2 to the Golgi. Sterol deprivation or phosphorylation by PCK1 reduce oxysterol-binding, disrupting the interaction between INSIG2 and SCAP, thereby promoting Golgi transport of the SCAP-SREBP complex, followed by processing and nuclear translocation of SREBF1/SREBP1 and SREBF2/SREBP2. Also regulates cholesterol synthesis by regulating degradation of HMGCR: initiates the sterol-mediated ubiquitin-mediated endoplasmic reticulum-associated degradation (ERAD) of HMGCR via recruitment of the reductase to the ubiquitin ligase RNF139. This is Insulin-induced gene 2 protein from Homo sapiens (Human).